The following is a 120-amino-acid chain: NAD(P)H-quinone oxidoreductase subunit 3, chloroplastic (120 aa).

A run of 3 helical transmembrane segments spans residues 9–29, 60–80, and 88–108; these read IFWAFLIISSVIPIFAFIISG, ICYYMFALVFVVFDVETVFLY, and ILGVSVFIEALIFVLILIVGS.

Belongs to the complex I subunit 3 family. NDH is composed of at least 16 different subunits, 5 of which are encoded in the nucleus.

It is found in the plastid. Its subcellular location is the chloroplast thylakoid membrane. It carries out the reaction a plastoquinone + NADH + (n+1) H(+)(in) = a plastoquinol + NAD(+) + n H(+)(out). It catalyses the reaction a plastoquinone + NADPH + (n+1) H(+)(in) = a plastoquinol + NADP(+) + n H(+)(out). In terms of biological role, NDH shuttles electrons from NAD(P)H:plastoquinone, via FMN and iron-sulfur (Fe-S) centers, to quinones in the photosynthetic chain and possibly in a chloroplast respiratory chain. The immediate electron acceptor for the enzyme in this species is believed to be plastoquinone. Couples the redox reaction to proton translocation, and thus conserves the redox energy in a proton gradient. In Morus indica (Mulberry), this protein is NAD(P)H-quinone oxidoreductase subunit 3, chloroplastic.